We begin with the raw amino-acid sequence, 496 residues long: Cytochrome f, chloroplastic (496 aa).

The N-terminal 149 residues, 1–149, are a transit peptide targeting the chloroplast; sequence MASLQTPVMV…VGAAAGSANA (149 aa). Heme is bound by residues Tyr150, Cys170, Cys173, and His174. Residues 462–481 traverse the membrane as a helical segment; the sequence is VQAFLFFSFTVLATQTLLVV.

The protein belongs to the cytochrome f family. Interacts with plastocyanin and Rieske iron-sulfur protein. Heme is required as a cofactor.

It is found in the plastid. The protein resides in the chloroplast thylakoid membrane. Its function is as follows. Translocates protons across the thylakoid membrane and transfers electrons from photosystem II to photosystem I. It receives electrons from the Rieske iron-sulfur protein and passes them to plastocyanin. This Euglena gracilis protein is Cytochrome f, chloroplastic (petA).